The chain runs to 106 residues: UPF0145 protein CLH_2273 (106 aa).

This sequence belongs to the UPF0145 family.

This Clostridium botulinum (strain Alaska E43 / Type E3) protein is UPF0145 protein CLH_2273.